Consider the following 561-residue polypeptide: 3beta-hydroxysteroid-dehydrogenase/decarboxylase isoform 3 (561 aa).

Lysine 166 provides a ligand contact to NAD(+). Positions 379-561 constitute a Reticulon domain; that stretch reads VADILLWRNE…SDASSKPMFM (183 aa). A run of 3 helical transmembrane segments spans residues 392 to 412, 420 to 440, and 504 to 524; these read FVSF…GNTF, LFIF…IFGF, and SLAA…FIYE.

This sequence belongs to the 3-beta-HSD family.

The protein localises to the endoplasmic reticulum membrane. It carries out the reaction a 3beta-hydroxysteroid-4alpha-carboxylate + NADP(+) = a 3-oxosteroid + CO2 + NADPH. The catalysed reaction is a 3beta-hydroxysteroid-4alpha-carboxylate + NAD(+) = a 3-oxosteroid + CO2 + NADH. It functions in the pathway steroid biosynthesis; zymosterol biosynthesis; zymosterol from lanosterol: step 4/6. The sequence is that of 3beta-hydroxysteroid-dehydrogenase/decarboxylase isoform 3 (3BETAHSD/D3) from Arabidopsis thaliana (Mouse-ear cress).